Consider the following 90-residue polypeptide: U7-theraphotoxin-Hhn1j (90 aa).

The N-terminal stretch at 1–19 (MKTAIFTVVLALAVFAVLS) is a signal peptide. Positions 20-50 (FGWEANEKALSEEFTELIHEKEAASETEARE) are excised as a propeptide. 3 disulfide bridges follow: C51–C65, C58–C70, and C64–C81.

The protein belongs to the neurotoxin 10 (Hwtx-1) family. 13 (Hntx-13) subfamily. In terms of tissue distribution, expressed by the venom gland.

Its subcellular location is the secreted. Its function is as follows. Ion channel inhibitor. This Cyriopagopus hainanus (Chinese bird spider) protein is U7-theraphotoxin-Hhn1j.